The primary structure comprises 155 residues: 17.3 kDa class II heat shock protein (155 aa).

The region spanning 39 to 155 (DAKAMAATPA…KPKTIEVKVA (117 aa)) is the sHSP domain.

It belongs to the small heat shock protein (HSP20) family.

The protein localises to the cytoplasm. The chain is 17.3 kDa class II heat shock protein from Solanum peruvianum (Peruvian tomato).